Consider the following 643-residue polypeptide: Sodium-dependent nutrient amino acid transporter 1 (643 aa).

Residues 1–38 (MELKGVQPSNGSPNGNGNGATNAASTEKTDAEKPTAER) are disordered. Residues 1–40 (MELKGVQPSNGSPNGNGNGATNAASTEKTDAEKPTAERTN) lie on the Cytoplasmic side of the membrane. Over residues 8–26 (PSNGSPNGNGNGATNAAST) the composition is skewed to low complexity. A compositionally biased stretch (basic and acidic residues) spans 27 to 36 (EKTDAEKPTA). 3 helical membrane passes run 41–61 (WGNG…LGNV), 74–94 (GAFL…MYYL), and 111–131 (SVVP…ICII). N-linked (GlcNAc...) asparagine glycans are attached at residues Asn185, Asn190, and Asn200. 9 consecutive transmembrane segments (helical) span residues 231–251 (PDWK…LVIM), 260–280 (AAYF…IRAV), 309–329 (AVVQ…MFAS), 343–363 (IVTT…FAIL), 403–423 (LFSV…IVAL), 449–469 (VCGF…ILTL), 476–496 (TYVV…VYGL), 518–538 (CWSF…MATI), and 554–574 (VAGW…GLWY).

It belongs to the sodium:neurotransmitter symporter (SNF) (TC 2.A.22) family.

The protein resides in the membrane. Its function is as follows. Unusual broad substrate spectrum amino acid:sodium cotransporter that promotes absorption of the D isomers of essential amino acids. Neutral amino acids are the preferred substrates, especially methionine and phenylalanine. The chain is Sodium-dependent nutrient amino acid transporter 1 from Drosophila simulans (Fruit fly).